The chain runs to 472 residues: Aspartyl/glutamyl-tRNA(Asn/Gln) amidotransferase subunit B (472 aa).

It belongs to the GatB/GatE family. GatB subfamily. In terms of assembly, heterotrimer of A, B and C subunits.

The catalysed reaction is L-glutamyl-tRNA(Gln) + L-glutamine + ATP + H2O = L-glutaminyl-tRNA(Gln) + L-glutamate + ADP + phosphate + H(+). It carries out the reaction L-aspartyl-tRNA(Asn) + L-glutamine + ATP + H2O = L-asparaginyl-tRNA(Asn) + L-glutamate + ADP + phosphate + 2 H(+). Allows the formation of correctly charged Asn-tRNA(Asn) or Gln-tRNA(Gln) through the transamidation of misacylated Asp-tRNA(Asn) or Glu-tRNA(Gln) in organisms which lack either or both of asparaginyl-tRNA or glutaminyl-tRNA synthetases. The reaction takes place in the presence of glutamine and ATP through an activated phospho-Asp-tRNA(Asn) or phospho-Glu-tRNA(Gln). The chain is Aspartyl/glutamyl-tRNA(Asn/Gln) amidotransferase subunit B from Elusimicrobium minutum (strain Pei191).